Consider the following 284-residue polypeptide: MPFSRLFGKKEKNQMDDIVEEGVQRVQELPMDKIFPNQFQPRTVFDQDKIDELARTIRIHGVIQPIVVREMEPDYYEIIAGERRFRAVLSLEMEKIPAIIQNLDDEEVAAIALIENLQREELTPIEEAKAYRSLLDMQDVTQEALAQRVGKSQSAIANKMRLLKLPETVQEAVLIKQISERHARSLLALETEEQQVALLAEIAENHWNVKQTEARIQEILGVKKQVATKKTKPKRQAISRDVRIAMNTIKQSVTMVKDNGMDLDFTEEETDDFYQITIQIPKKK.

Positions 143–162 form a DNA-binding region, H-T-H motif; the sequence is EALAQRVGKSQSAIANKMRL.

This sequence belongs to the ParB family.

It is found in the cytoplasm. The protein resides in the nucleoid. Effects nucleoid occlusion by binding relatively nonspecifically to DNA and preventing the assembly of the division machinery in the vicinity of the nucleoid, especially under conditions that disturb the cell cycle. It helps to coordinate cell division and chromosome segregation by preventing the formation of the Z ring through the nucleoid, which would cause chromosome breakage. In Listeria monocytogenes serovar 1/2a (strain ATCC BAA-679 / EGD-e), this protein is Nucleoid occlusion protein.